A 173-amino-acid chain; its full sequence is Protein-export protein SecB (173 aa).

This sequence belongs to the SecB family. Homotetramer, a dimer of dimers. One homotetramer interacts with 1 SecA dimer.

Its subcellular location is the cytoplasm. One of the proteins required for the normal export of preproteins out of the cell cytoplasm. It is a molecular chaperone that binds to a subset of precursor proteins, maintaining them in a translocation-competent state. It also specifically binds to its receptor SecA. In Ralstonia nicotianae (strain ATCC BAA-1114 / GMI1000) (Ralstonia solanacearum), this protein is Protein-export protein SecB.